The primary structure comprises 67 residues: UPF0253 protein VS_2370 (67 aa).

Belongs to the UPF0253 family.

This chain is UPF0253 protein VS_2370, found in Vibrio atlanticus (strain LGP32) (Vibrio splendidus (strain Mel32)).